Here is a 646-residue protein sequence, read N- to C-terminus: bZIP transcription factor 39 (646 aa).

Residues 1–311 (MAEPALLDPT…KSKSKTKTKK (311 aa)) are Cytoplasmic-facing. A disordered region spans residues 25–172 (HELPLAGGGG…GGTVCEEEED (148 aa)). The span at 43-53 (LDGLEFDLPGD) shows a compositional bias: low complexity. Residues 59-69 (FLLRSPERDDS) are compositionally biased toward basic and acidic residues. The segment covering 71 to 98 (EGSAAGSGPTASPSSSPTTSASNSAVAN) has biased composition (low complexity). Residues 103 to 113 (EVKHEESDEGR) show a composition bias toward basic and acidic residues. Residues 159-172 (DSDEGGTVCEEEED) show a composition bias toward acidic residues. Residues 172–232 (DERRAARLMR…AENATLRQQL (61 aa)) enclose the bZIP domain. Residues 174–205 (RRAARLMRNRESAQLSRQRKKRYVEELEEKVK) form a basic motif region. A leucine-zipper region spans residues 211–218 (INDLNSRI). Residues 272–308 (LVPIPRLKPQQPVPSSKVVKKPESKKTVENKSKSKTK) are disordered. Residues 279-288 (KPQQPVPSSK) show a composition bias toward low complexity. Residues 291-303 (KKPESKKTVENKS) show a composition bias toward basic and acidic residues. Residues 312-332 (VASVSLLGLLLIMLVFGAFIP) form a helical membrane-spanning segment. Over 333–646 (GFNHNFGMCG…FKSSSPHLVN (314 aa)) the chain is Lumenal. N-linked (GlcNAc...) asparagine glycans are attached at residues Asn371, Asn399, Asn525, Asn530, Asn565, and Asn571. Residues 560 to 585 (TGKTANNTEPFNRTSESSSKLPDSKP) form a disordered region. Residues 562-585 (KTANNTEPFNRTSESSSKLPDSKP) show a composition bias toward polar residues.

The protein belongs to the bZIP family. Highly expressed in leaf blade, and at lower levels in roots, leaf sheaths, flowers and seeds.

The protein resides in the endoplasmic reticulum membrane. The protein localises to the nucleus. Its function is as follows. Transcription factor involved in endoplasmic reticulum (ER) stress response. Acts as a ER stress sensor and activates the transcription factor BZIP50 and the chaperone BIP1. This Oryza sativa subsp. japonica (Rice) protein is bZIP transcription factor 39.